The chain runs to 546 residues: ATP synthase F(1) complex catalytic subunit beta, mitochondrial (546 aa).

A mitochondrion-targeting transit peptide spans 1–45; sequence MLGFVGRVAATSASGALRGLGPSPLPQVKVLLRASPAALQSARDY. N6-acetyllysine; alternate occurs at positions 123, 132, and 160. Lys123, Lys132, and Lys160 each carry N6-succinyllysine; alternate. N6-acetyllysine is present on Lys197. Gly208, Val209, Gly210, Lys211, Thr212, and Val213 together coordinate ADP. ATP is bound at residue Gly208. The phosphate site is built by Gly208, Val209, Gly210, Lys211, and Thr212. The ATP site is built by Gly210, Lys211, Thr212, and Val213. Thr212 contacts Mg(2+). A Mg(2+)-binding site is contributed by Glu237. Arg238 serves as a coordination point for ATP. N6-acetyllysine; alternate occurs at positions 258 and 263. Lys258 and Lys263 each carry N6-succinyllysine; alternate. At Thr311 the chain carries Phosphothreonine. Residue Lys425 is modified to N6-acetyllysine. At Ser432 the chain carries Phosphoserine. N6-acetyllysine is present on residues Lys479 and Lys484. Position 521 is an N6-acetyllysine; alternate (Lys521). Lys521 carries the N6-succinyllysine; alternate modification. Positions 521-546 are disordered; the sequence is KLAEEHSATQTSPSPKGAAAXXXRVV.

The protein belongs to the ATPase alpha/beta chains family. In terms of assembly, homotrimer. Component of the ATP synthase complex composed at least of ATP5F1A/subunit alpha, ATP5F1B/subunit beta, ATP5MC1/subunit c (homooctomer), MT-ATP6/subunit a, MT-ATP8/subunit 8, ATP5ME/subunit e, ATP5MF/subunit f, ATP5MG/subunit g, ATP5MK/subunit k, ATP5MJ/subunit j, ATP5F1C/subunit gamma, ATP5F1D/subunit delta, ATP5F1E/subunit epsilon, ATP5PF/subunit F6, ATP5PB/subunit b, ATP5PD/subunit d, ATP5PO/subunit OSCP. ATP synthase complex consists of a soluble F(1) head domain (subunits alpha(3) and beta(3)) - the catalytic core - and a membrane F(0) domain - the membrane proton channel (subunits c, a, 8, e, f, g, k and j). These two domains are linked by a central stalk (subunits gamma, delta, and epsilon) rotating inside the F1 region and a stationary peripheral stalk (subunits F6, b, d, and OSCP). Interacts with PPIF. Interacts with BCL2L1 isoform BCL-X(L); the interaction mediates the association of BCL2L1 isoform BCL-X(L) with the mitochondrial membrane F(1)F(0) ATP synthase and enhances neurons metabolic efficiency. Interacts with CLN5 and PPT1. Interacts with S100A1; this interaction increases F1-ATPase activity. Interacts with MTLN. Interacts with TTC5/STRAP; the interaction results in decreased mitochondrial ATP production.

The protein localises to the mitochondrion inner membrane. The catalysed reaction is ATP + H2O + 4 H(+)(in) = ADP + phosphate + 5 H(+)(out). Functionally, catalytic subunit beta, of the mitochondrial membrane ATP synthase complex (F(1)F(0) ATP synthase or Complex V) that produces ATP from ADP in the presence of a proton gradient across the membrane which is generated by electron transport complexes of the respiratory chain. ATP synthase complex consist of a soluble F(1) head domain - the catalytic core - and a membrane F(1) domain - the membrane proton channel. These two domains are linked by a central stalk rotating inside the F(1) region and a stationary peripheral stalk. During catalysis, ATP synthesis in the catalytic domain of F(1) is coupled via a rotary mechanism of the central stalk subunits to proton translocation. In vivo, can only synthesize ATP although its ATP hydrolase activity can be activated artificially in vitro. With the subunit alpha (ATP5F1A), forms the catalytic core in the F(1) domain. This Canis lupus familiaris (Dog) protein is ATP synthase F(1) complex catalytic subunit beta, mitochondrial.